Reading from the N-terminus, the 104-residue chain is Large ribosomal subunit protein uL24 (104 aa).

This sequence belongs to the universal ribosomal protein uL24 family. As to quaternary structure, part of the 50S ribosomal subunit.

Functionally, one of two assembly initiator proteins, it binds directly to the 5'-end of the 23S rRNA, where it nucleates assembly of the 50S subunit. Its function is as follows. One of the proteins that surrounds the polypeptide exit tunnel on the outside of the subunit. This chain is Large ribosomal subunit protein uL24, found in Bartonella tribocorum (strain CIP 105476 / IBS 506).